A 182-amino-acid chain; its full sequence is Adenine phosphoribosyltransferase (182 aa).

Belongs to the purine/pyrimidine phosphoribosyltransferase family. Homodimer.

The protein localises to the cytoplasm. It catalyses the reaction AMP + diphosphate = 5-phospho-alpha-D-ribose 1-diphosphate + adenine. It functions in the pathway purine metabolism; AMP biosynthesis via salvage pathway; AMP from adenine: step 1/1. Catalyzes a salvage reaction resulting in the formation of AMP, that is energically less costly than de novo synthesis. The polypeptide is Adenine phosphoribosyltransferase (Campylobacter jejuni subsp. jejuni serotype O:2 (strain ATCC 700819 / NCTC 11168)).